The following is a 146-amino-acid chain: Hemoglobin subunit beta (146 aa).

Val1 carries the post-translational modification N-acetylvaline. In terms of domain architecture, Globin spans 2 to 146 (HLTAEEKDAV…VANALAHRYH (145 aa)). Position 44 is a phosphoserine (Ser44). Lys59 bears the N6-acetyllysine mark. Residue His63 participates in heme b binding. An N6-acetyllysine modification is found at Lys82. His92 provides a ligand contact to heme b. S-nitrosocysteine is present on Cys93.

This sequence belongs to the globin family. Heterotetramer of two alpha chains and two beta chains. In terms of tissue distribution, red blood cells.

Its function is as follows. Involved in oxygen transport from the lung to the various peripheral tissues. The polypeptide is Hemoglobin subunit beta (HBB) (Hippopotamus amphibius (Hippopotamus)).